Reading from the N-terminus, the 433-residue chain is tRNA-2-methylthio-N(6)-dimethylallyladenosine synthase (433 aa).

The MTTase N-terminal domain maps to 4–119; it reads KKLFIQTLGC…ITQAIKTPKF (116 aa). [4Fe-4S] cluster is bound by residues C13, C50, C82, C151, C155, and C158. Positions 137–370 constitute a Radical SAM core domain; sequence RNSIYKSYIN…QNRHSEILDK (234 aa). One can recognise a TRAM domain in the interval 373-433; the sequence is KKQENKTFKV…KRMVLYGEIV (61 aa).

This sequence belongs to the methylthiotransferase family. MiaB subfamily. In terms of assembly, monomer. It depends on [4Fe-4S] cluster as a cofactor.

The protein localises to the cytoplasm. It catalyses the reaction N(6)-dimethylallyladenosine(37) in tRNA + (sulfur carrier)-SH + AH2 + 2 S-adenosyl-L-methionine = 2-methylsulfanyl-N(6)-dimethylallyladenosine(37) in tRNA + (sulfur carrier)-H + 5'-deoxyadenosine + L-methionine + A + S-adenosyl-L-homocysteine + 2 H(+). Functionally, catalyzes the methylthiolation of N6-(dimethylallyl)adenosine (i(6)A), leading to the formation of 2-methylthio-N6-(dimethylallyl)adenosine (ms(2)i(6)A) at position 37 in tRNAs that read codons beginning with uridine. The protein is tRNA-2-methylthio-N(6)-dimethylallyladenosine synthase of Campylobacter jejuni subsp. jejuni serotype O:2 (strain ATCC 700819 / NCTC 11168).